A 214-amino-acid polypeptide reads, in one-letter code: MKAFTQHNGLVAPLDRANVDTDQIIPKQFLKSIKRTGFGPNLFDEWRYLDVGQPYQDNSKRPLNKDFVLNAERYQGASVLLARENFGCGSSREHAPWALEEYGFRSIIAPSYADIFFNNSFKNGLLPIILSDAEVDELFQQVEATPGYQLRIDLQAQTVTRPDGKVLKFEIDAFRKHCLLNGLDDIGLTLQDGDAIAAFEAKHRASQPWLFRDA.

This sequence belongs to the LeuD family. LeuD type 1 subfamily. Heterodimer of LeuC and LeuD.

The catalysed reaction is (2R,3S)-3-isopropylmalate = (2S)-2-isopropylmalate. The protein operates within amino-acid biosynthesis; L-leucine biosynthesis; L-leucine from 3-methyl-2-oxobutanoate: step 2/4. Functionally, catalyzes the isomerization between 2-isopropylmalate and 3-isopropylmalate, via the formation of 2-isopropylmaleate. The protein is 3-isopropylmalate dehydratase small subunit of Pseudomonas fluorescens (strain ATCC BAA-477 / NRRL B-23932 / Pf-5).